Here is a 430-residue protein sequence, read N- to C-terminus: Crotonyl-CoA carboxylase/reductase (430 aa).

It belongs to the zinc-containing alcohol dehydrogenase family. Crotonyl-CoA carboxylase/reductase subfamily. Homodimer. The cofactor is Despite some sequence similarity to zinc-containing alcohol dehydrogenases, this enzyme does not bind any metals..

It carries out the reaction (2S)-ethylmalonyl-CoA + NADP(+) = (2E)-butenoyl-CoA + CO2 + NADPH. The catalysed reaction is (S)-methylmalonyl-CoA + NADP(+) = acryloyl-CoA + CO2 + NADPH. It catalyses the reaction butanoyl-CoA + NADP(+) = (2E)-butenoyl-CoA + NADPH + H(+). Functionally, catalyzes the NADPH-dependent reductive carboxylation of crotonyl-CoA ((2E)-butenoyl-CoA) to (2S)-ethylmalonyl-CoA, in the presence of CO2. This is a key reaction in the ethylmalonyl-CoA pathway for acetyl-CoA assimilation required for R.sphaeroides growth on acetate as sole carbon source. Is also able to accept acryloyl-CoA as an alternative substrate, yielding (2S)-methylmalonyl-CoA. To a lesser extent, when CO2 is absent, the enzyme also catalyzes the reduction of crotonyl-CoA to butanoyl-CoA. This chain is Crotonyl-CoA carboxylase/reductase, found in Cereibacter sphaeroides (strain ATCC 17023 / DSM 158 / JCM 6121 / CCUG 31486 / LMG 2827 / NBRC 12203 / NCIMB 8253 / ATH 2.4.1.) (Rhodobacter sphaeroides).